A 220-amino-acid chain; its full sequence is Large ribosomal subunit protein uL16z (220 aa).

This sequence belongs to the universal ribosomal protein uL16 family. Component of the small ribosomal subunit. Mature ribosomes consist of a small (40S) and a large (60S) subunit. The 40S subunit contains about 33 different proteins and 1 molecule of RNA (18S). The 60S subunit contains about 49 different proteins and 3 molecules of RNA (25S, 5.8S and 5S). Interacts with NIK1. Interacts with LIMYB. Phosphorylated by NIK1 and NIK2 in vitro. As to expression, ubiquitous, with the highest expression in flowers. Expressed in seedlings, leaves, roots, stems and flowers. Expressed in young leaves, mostly in dividing cells and in the hydathodes, in the root tips and lateral root primordia, in pistils, anthers, and pollen grains, and in developing seeds.

The protein localises to the cytoplasm. It is found in the nucleus. Ribosomal protein involved in translational regulation. Contribute to general translation under UV-B stress. Involved in the NIK1-mediated defense response to geminivirus infection. Acts coordinately with LIMYB as a transcriptional repressor. In Arabidopsis thaliana (Mouse-ear cress), this protein is Large ribosomal subunit protein uL16z.